Here is a 475-residue protein sequence, read N- to C-terminus: tRNA (guanine(37)-N(1))-methyltransferase (475 aa).

Residues histidine 219, 258–259 (DL), and 286–287 (DG) each bind S-adenosyl-L-methionine. A disordered region spans residues 306–328 (KITKQKPTSNDKKRNRKVESPTV). Asparagine 349 is a binding site for S-adenosyl-L-methionine. The span at 456–469 (NLVSQSDVSKSSDN) shows a compositional bias: polar residues. The disordered stretch occupies residues 456–475 (NLVSQSDVSKSSDNILEKDT).

This sequence belongs to the class I-like SAM-binding methyltransferase superfamily. TRM5/TYW2 family. As to quaternary structure, monomer.

Its subcellular location is the mitochondrion matrix. The protein localises to the nucleus. The protein resides in the cytoplasm. It carries out the reaction guanosine(37) in tRNA + S-adenosyl-L-methionine = N(1)-methylguanosine(37) in tRNA + S-adenosyl-L-homocysteine + H(+). Specifically methylates the N1 position of guanosine-37 in various cytoplasmic and mitochondrial tRNAs. Methylation is not dependent on the nature of the nucleoside 5' of the target nucleoside. This is the first step in the biosynthesis of wybutosine (yW), a modified base adjacent to the anticodon of tRNAs and required for accurate decoding. In Batrachochytrium dendrobatidis (strain JAM81 / FGSC 10211) (Frog chytrid fungus), this protein is tRNA (guanine(37)-N(1))-methyltransferase.